Here is a 309-residue protein sequence, read N- to C-terminus: 4-diphosphocytidyl-2-C-methyl-D-erythritol kinase (309 aa).

Lys11 is a catalytic residue. 94–104 (PVAAGLAGGSA) provides a ligand contact to ATP. Asp136 is a catalytic residue.

It belongs to the GHMP kinase family. IspE subfamily.

It catalyses the reaction 4-CDP-2-C-methyl-D-erythritol + ATP = 4-CDP-2-C-methyl-D-erythritol 2-phosphate + ADP + H(+). It functions in the pathway isoprenoid biosynthesis; isopentenyl diphosphate biosynthesis via DXP pathway; isopentenyl diphosphate from 1-deoxy-D-xylulose 5-phosphate: step 3/6. Functionally, catalyzes the phosphorylation of the position 2 hydroxy group of 4-diphosphocytidyl-2C-methyl-D-erythritol. The chain is 4-diphosphocytidyl-2-C-methyl-D-erythritol kinase from Synechococcus sp. (strain JA-3-3Ab) (Cyanobacteria bacterium Yellowstone A-Prime).